Reading from the N-terminus, the 448-residue chain is Ribosomal protein uS12 methylthiotransferase RimO (448 aa).

In terms of domain architecture, MTTase N-terminal spans 6 to 116 (PKVGIVSLGC…VVEAVHAAIP (111 aa)). Residues cysteine 15, cysteine 51, cysteine 80, cysteine 147, cysteine 151, and cysteine 154 each contribute to the [4Fe-4S] cluster site. In terms of domain architecture, Radical SAM core spans 133 to 371 (LTPHHYAYLK…EAARQIADER (239 aa)). The TRAM domain occupies 373-439 (AAKEGTRIEV…DYDLWGDVVE (67 aa)).

It belongs to the methylthiotransferase family. RimO subfamily. It depends on [4Fe-4S] cluster as a cofactor.

It localises to the cytoplasm. The enzyme catalyses L-aspartate(89)-[ribosomal protein uS12]-hydrogen + (sulfur carrier)-SH + AH2 + 2 S-adenosyl-L-methionine = 3-methylsulfanyl-L-aspartate(89)-[ribosomal protein uS12]-hydrogen + (sulfur carrier)-H + 5'-deoxyadenosine + L-methionine + A + S-adenosyl-L-homocysteine + 2 H(+). In terms of biological role, catalyzes the methylthiolation of an aspartic acid residue of ribosomal protein uS12. This chain is Ribosomal protein uS12 methylthiotransferase RimO, found in Paramagnetospirillum magneticum (strain ATCC 700264 / AMB-1) (Magnetospirillum magneticum).